The sequence spans 414 residues: Bystin (414 aa).

Positions 1 to 11 are enriched in basic residues; that stretch reads MSAKRNTKLRH. The interval 1 to 91 is disordered; sequence MSAKRNTKLR…PSDDEGQADD (91 aa). The span at 12–24 shows a compositional bias: basic and acidic residues; sequence APLEHAYVDDKSV. The segment covering 25-34 has biased composition (basic residues); that stretch reads RRNKRSKQRG.

This sequence belongs to the bystin family.

The protein resides in the nucleus. It localises to the nucleolus. In terms of biological role, required for processing of 20S pre-rRNA precursor and biogenesis of 40S ribosomal subunits. This chain is Bystin (bysl), found in Monosiga brevicollis (Choanoflagellate).